The chain runs to 935 residues: Protein translocase subunit SecA (935 aa).

Residues Gln-86, 104 to 108 (GEGKT), and Asp-494 each bind ATP. A disordered region spans residues 879–935 (EQAATARAQQHSSAAVAAPEQGATQRGAFGQRVSAADDAAPANRAERRAQKKPTKRH).

This sequence belongs to the SecA family. In terms of assembly, monomer and homodimer. Part of the essential Sec protein translocation apparatus which comprises SecA, SecYEG and auxiliary proteins SecDF. Other proteins may also be involved.

The protein resides in the cell membrane. It is found in the cytoplasm. It catalyses the reaction ATP + H2O + cellular proteinSide 1 = ADP + phosphate + cellular proteinSide 2.. Its function is as follows. Part of the Sec protein translocase complex. Interacts with the SecYEG preprotein conducting channel. Has a central role in coupling the hydrolysis of ATP to the transfer of proteins into and across the cell membrane, serving as an ATP-driven molecular motor driving the stepwise translocation of polypeptide chains across the membrane. The protein is Protein translocase subunit SecA of Leifsonia xyli subsp. xyli (strain CTCB07).